The primary structure comprises 76 residues: ATP synthase subunit 9, mitochondrial (76 aa).

M1 bears the N-formylmethionine mark. 2 helical membrane-spanning segments follow: residues 14 to 34 (ISTIGLLGAGIGIAIVFAALI) and 52 to 72 (ILGFALSEATGLFCLMVSFLL).

This sequence belongs to the ATPase C chain family. F-type ATPases have 2 components, CF(1) - the catalytic core - and CF(0) - the membrane proton channel. In yeast, the dimeric form of ATP synthase consists of 18 polypeptides: alpha, beta, gamma, delta, epsilon, 4 (B), 5 (OSCP), 6 (A), 8, 9 (C), d, E (Tim11), f, g, h, i, j and k.

It localises to the mitochondrion membrane. Mitochondrial membrane ATP synthase (F(1)F(0) ATP synthase or Complex V) produces ATP from ADP in the presence of a proton gradient across the membrane which is generated by electron transport complexes of the respiratory chain. F-type ATPases consist of two structural domains, F(1) - containing the extramembraneous catalytic core and F(0) - containing the membrane proton channel, linked together by a central stalk and a peripheral stalk. During catalysis, ATP synthesis in the catalytic domain of F(1) is coupled via a rotary mechanism of the central stalk subunits to proton translocation. Part of the complex F(0) domain. A homomeric c-ring of probably 10 subunits is part of the complex rotary element. The sequence is that of ATP synthase subunit 9, mitochondrial (ATP9) from Saccharomyces paradoxus (Yeast).